A 91-amino-acid chain; its full sequence is Probable Fe(2+)-trafficking protein (91 aa).

Belongs to the Fe(2+)-trafficking protein family. Monomer.

Functionally, could be a mediator in iron transactions between iron acquisition and iron-requiring processes, such as synthesis and/or repair of Fe-S clusters in biosynthetic enzymes. The chain is Probable Fe(2+)-trafficking protein from Klebsiella pneumoniae (strain 342).